Consider the following 195-residue polypeptide: Nucleoid occlusion factor SlmA (195 aa).

In terms of domain architecture, HTH tetR-type spans 7 to 67; it reads TNRRAQILQA…GLIEFIEETL (61 aa). Positions 30–49 form a DNA-binding region, H-T-H motif; sequence TTAKLAEKVGVSEAALYRHF. Residues 109–141 are a coiled coil; the sequence is DALMGEQDRLRARIAKLFERLETQLKQVLRERK.

It belongs to the nucleoid occlusion factor SlmA family. In terms of assembly, homodimer. Interacts with FtsZ.

The protein localises to the cytoplasm. The protein resides in the nucleoid. Its function is as follows. Required for nucleoid occlusion (NO) phenomenon, which prevents Z-ring formation and cell division over the nucleoid. Acts as a DNA-associated cell division inhibitor that binds simultaneously chromosomal DNA and FtsZ, and disrupts the assembly of FtsZ polymers. SlmA-DNA-binding sequences (SBS) are dispersed on non-Ter regions of the chromosome, preventing FtsZ polymerization at these regions. This is Nucleoid occlusion factor SlmA from Alteromonas mediterranea (strain DSM 17117 / CIP 110805 / LMG 28347 / Deep ecotype).